The chain runs to 159 residues: Globin C, coelomic (159 aa).

Residue Gly-2 is modified to N-acetylglycine. A Globin domain is found at 12 to 158 (DLTLAQKKIV…VQAVLLVKHG (147 aa)). Positions 74 and 105 each coordinate heme b.

It belongs to the globin family. In terms of assembly, monomer.

The protein is Globin C, coelomic of Molpadia arenicola (Sea cucumber).